The sequence spans 47 residues: uncharacterized protein (47 aa).

A disordered region spans residues 22-47 (VGPRTKRANQASPPVGRHSSRLMCPG).

This is an uncharacterized protein from Saccharomyces cerevisiae (strain ATCC 204508 / S288c) (Baker's yeast).